Reading from the N-terminus, the 602-residue chain is Auxin response factor 18 (602 aa).

The TF-B3 DNA-binding region spans Phe-128–Ala-230. The tract at residues Thr-359 to Pro-396 is disordered. Residues Ser-360–Ser-371 show a composition bias toward polar residues. A PB1 domain is found at Arg-489–Lys-581.

The protein belongs to the ARF family. In terms of assembly, homodimers and heterodimers.

The protein resides in the nucleus. Auxin response factors (ARFs) are transcriptional factors that bind specifically to the DNA sequence 5'-TGTCTC-3' found in the auxin-responsive promoter elements (AuxREs). Could act as transcriptional activator or repressor. Formation of heterodimers with Aux/IAA proteins may alter their ability to modulate early auxin response genes expression. This chain is Auxin response factor 18 (ARF18), found in Arabidopsis thaliana (Mouse-ear cress).